Here is a 79-residue protein sequence, read N- to C-terminus: Protein VdcD (79 aa).

Involved in the non-oxidative decarboxylation and detoxification of phenolic derivatives under both aerobic and anaerobic conditions, however the precise biochemical function of VdcD in metabolism of phenolic acid is unknown. The protein is Protein VdcD of Streptomyces sp. (strain D7).